The sequence spans 337 residues: Large ribosomal subunit protein uL3 (337 aa).

This sequence belongs to the universal ribosomal protein uL3 family. Part of the 50S ribosomal subunit. Forms a cluster with proteins L14 and L24e.

One of the primary rRNA binding proteins, it binds directly near the 3'-end of the 23S rRNA, where it nucleates assembly of the 50S subunit. The chain is Large ribosomal subunit protein uL3 from Methanosphaerula palustris (strain ATCC BAA-1556 / DSM 19958 / E1-9c).